The sequence spans 400 residues: tRNA(Ile)-lysidine synthase (400 aa).

20-25 (SGGLDS) contributes to the ATP binding site.

It belongs to the tRNA(Ile)-lysidine synthase family.

It localises to the cytoplasm. The catalysed reaction is cytidine(34) in tRNA(Ile2) + L-lysine + ATP = lysidine(34) in tRNA(Ile2) + AMP + diphosphate + H(+). Ligates lysine onto the cytidine present at position 34 of the AUA codon-specific tRNA(Ile) that contains the anticodon CAU, in an ATP-dependent manner. Cytidine is converted to lysidine, thus changing the amino acid specificity of the tRNA from methionine to isoleucine. This chain is tRNA(Ile)-lysidine synthase, found in Wigglesworthia glossinidia brevipalpis.